The chain runs to 671 residues: Anaphase-promoting complex subunit cut9 (671 aa).

A disordered region spans residues 1-24 (MVVKRTQTDSRMQSTPGNHNHPDA). TPR repeat units lie at residues 83–114 (REDY…LDIT), 117–142 (PNDA…LLTK), 150–173 (SACR…LNLL), 198–229 (LEAS…ALMV), 234–257 (YEAF…LVLK), 268–296 (AAFL…DYLS), 306–334 (DLLL…ILEI), 341–368 (VYPL…LVDR), 373–402 (AVTW…SSTM), 407–435 (GPAW…TAAR), 442–470 (LPYL…SYAL), 475–507 (PLLL…LVKK), 513–545 (KPWA…GLLL), and 550–579 (ANVH…SLAI). The interval 622–643 (NLNTSDKSMSMEDQSGKVTESV) is disordered.

The APC/C is composed of at least 13 subunits: apc1, apc2, nuc2, apc4, apc5, cut9, apc8, apc10, apc11, hcn1, apc13, apc14 and apc15. Homodimer. Interacts directly with nuc2 and hcn1. Post-translationally, phosphorylated.

The protein resides in the nucleus. Functionally, component of the anaphase-promoting complex/cyclosome (APC/C), a cell cycle-regulated E3 ubiquitin-protein ligase complex that controls progression through mitosis and the G1 phase of the cell cycle. The APC/C is thought to confer substrate specificity and, in the presence of ubiquitin-conjugating E2 enzymes, it catalyzes the formation of protein-ubiquitin conjugates that are subsequently degraded by the 26S proteasome. May play a pivotal role in the control of anaphase. The polypeptide is Anaphase-promoting complex subunit cut9 (cut9) (Schizosaccharomyces pombe (strain 972 / ATCC 24843) (Fission yeast)).